The following is a 355-amino-acid chain: Probable sugar phosphate/phosphate translocator At3g10290 (355 aa).

Residues 19–51 (QKKQPNLSISSTTKMNKKNPDQKSDMSSSSSSP) are disordered. Residues 22–32 (QPNLSISSTTK) show a composition bias toward polar residues. 10 helical membrane-spanning segments follow: residues 55–75 (TLFISSLIILWYTSNIGVLLL), 89–109 (IFLTMCHMSACAILSYVSIVF), 124–144 (FLKVATLSIVFCASVVGGNIS), 150–170 (VSFNQAVGATTPFFTALFAYI), 177–197 (AWVTYGALVPVVTGVVIASGG), 198–218 (EPGFHWFGFIMCISATAARAF), 239–259 (LMLYMSPIAVIALLPVTIFME), 277–297 (YILLLVNSVMAYSANLLNFLV), 305–325 (TLQVLGNAKGAVAVVISILLF), and 328–348 (PVTVMGIGGYSITVLGVVAYG).

This sequence belongs to the TPT transporter family. TPT (TC 2.A.7.9) subfamily.

Its subcellular location is the membrane. This Arabidopsis thaliana (Mouse-ear cress) protein is Probable sugar phosphate/phosphate translocator At3g10290.